A 91-amino-acid chain; its full sequence is Large ribosomal subunit protein bL27 (91 aa).

This sequence belongs to the bacterial ribosomal protein bL27 family.

This Pseudomonas savastanoi pv. phaseolicola (strain 1448A / Race 6) (Pseudomonas syringae pv. phaseolicola (strain 1448A / Race 6)) protein is Large ribosomal subunit protein bL27.